A 398-amino-acid polypeptide reads, in one-letter code: Bifunctional enzyme IspD/IspF (398 aa).

Residues 1-234 (MAKSQRTAVV…ARLAAQLGDI (234 aa)) are 2-C-methyl-D-erythritol 4-phosphate cytidylyltransferase. The segment at 235-398 (RTGTGYDVHA…LPFNEKTWSV (164 aa)) is 2-C-methyl-D-erythritol 2,4-cyclodiphosphate synthase. The a divalent metal cation site is built by aspartate 241 and histidine 243. 4-CDP-2-C-methyl-D-erythritol 2-phosphate contacts are provided by residues 241 to 243 (DVH) and 267 to 268 (HS). Histidine 275 contacts a divalent metal cation. Residues 289 to 291 (DIG), 365 to 368 (TTSE), phenylalanine 372, and arginine 375 contribute to the 4-CDP-2-C-methyl-D-erythritol 2-phosphate site.

In the N-terminal section; belongs to the IspD/TarI cytidylyltransferase family. IspD subfamily. It in the C-terminal section; belongs to the IspF family. A divalent metal cation is required as a cofactor.

It catalyses the reaction 2-C-methyl-D-erythritol 4-phosphate + CTP + H(+) = 4-CDP-2-C-methyl-D-erythritol + diphosphate. The enzyme catalyses 4-CDP-2-C-methyl-D-erythritol 2-phosphate = 2-C-methyl-D-erythritol 2,4-cyclic diphosphate + CMP. The protein operates within isoprenoid biosynthesis; isopentenyl diphosphate biosynthesis via DXP pathway; isopentenyl diphosphate from 1-deoxy-D-xylulose 5-phosphate: step 2/6. It participates in isoprenoid biosynthesis; isopentenyl diphosphate biosynthesis via DXP pathway; isopentenyl diphosphate from 1-deoxy-D-xylulose 5-phosphate: step 4/6. Its function is as follows. Bifunctional enzyme that catalyzes the formation of 4-diphosphocytidyl-2-C-methyl-D-erythritol from CTP and 2-C-methyl-D-erythritol 4-phosphate (MEP) (IspD), and catalyzes the conversion of 4-diphosphocytidyl-2-C-methyl-D-erythritol 2-phosphate (CDP-ME2P) to 2-C-methyl-D-erythritol 2,4-cyclodiphosphate (ME-CPP) with a corresponding release of cytidine 5-monophosphate (CMP) (IspF). The protein is Bifunctional enzyme IspD/IspF of Bradyrhizobium diazoefficiens (strain JCM 10833 / BCRC 13528 / IAM 13628 / NBRC 14792 / USDA 110).